The sequence spans 1202 residues: DNA-directed RNA polymerase subunit beta (1202 aa).

It belongs to the RNA polymerase beta chain family. The RNAP catalytic core consists of 2 alpha, 1 beta, 1 beta' and 1 omega subunit. When a sigma factor is associated with the core the holoenzyme is formed, which can initiate transcription.

It catalyses the reaction RNA(n) + a ribonucleoside 5'-triphosphate = RNA(n+1) + diphosphate. Functionally, DNA-dependent RNA polymerase catalyzes the transcription of DNA into RNA using the four ribonucleoside triphosphates as substrates. This Leuconostoc mesenteroides subsp. mesenteroides (strain ATCC 8293 / DSM 20343 / BCRC 11652 / CCM 1803 / JCM 6124 / NCDO 523 / NBRC 100496 / NCIMB 8023 / NCTC 12954 / NRRL B-1118 / 37Y) protein is DNA-directed RNA polymerase subunit beta.